A 375-amino-acid chain; its full sequence is CMP-N-acetylneuraminate-beta-1,4-galactoside alpha-2,3-sialyltransferase (375 aa).

Over 1–8 the chain is Cytoplasmic; it reads MGLLVFVR. The helical; Signal-anchor for type II membrane protein transmembrane segment at 9–28 threads the bilayer; that stretch reads NLLLALCLFLVLGFLYYSAW. The Lumenal segment spans residues 29 to 375; sequence KLHLLQWEED…RVITDLSSGI (347 aa). 2 N-linked (GlcNAc...) asparagine glycosylation sites follow: Asn80 and Asn171. An intrachain disulfide couples Cys160 to Cys314.

It belongs to the glycosyltransferase 29 family. The soluble form derives from the membrane form by proteolytic processing. Highly expressed in adult skeletal muscle and in all fetal tissues examined and to a much lesser extent in placenta, lung and liver.

It localises to the golgi apparatus. Its subcellular location is the golgi stack membrane. It is found in the secreted. The enzyme catalyses a beta-D-galactosyl-(1-&gt;4)-N-acetyl-beta-D-glucosaminyl derivative + CMP-N-acetyl-beta-neuraminate = an N-acetyl-alpha-neuraminyl-(2-&gt;3)-beta-D-galactosyl-(1-&gt;4)-N-acetyl-beta-D-glucosaminyl derivative + CMP + H(+). It participates in protein modification; protein glycosylation. Its function is as follows. Catalyzes the formation of the NeuAc-alpha-2,3-Gal-beta-1,4-GlcNAc-, NeuAc-alpha-2,3-Gal-beta-1,3-GlcNAc- and NeuAc-alpha-2,3-Gal-beta-1,3-GalNAc- sequences found in terminal carbohydrate groups of glycoproteins and glycolipids. The highest activity is toward Gal-beta-1,3-GlcNAc and the lowest toward Gal-beta-1,3-GalNAc. This Homo sapiens (Human) protein is CMP-N-acetylneuraminate-beta-1,4-galactoside alpha-2,3-sialyltransferase (ST3GAL3).